The chain runs to 350 residues: MIALRENIAEMAGYVPGFQPLDVASYIKLNTNENPYPPSPKVLEAIAKEAGEGLRRYPDAASVLAREEAAKVYGFDPSWIIMANGSDEVLNNLIRACAGEGEEIAFINPSYSYYGTLAEVQGARVRTFGLTESFEPEGIPEHYDGKLFFLTNPNAPLGFTYSQRYIADLAGRLSGVLVVDEAYVDFAEETSLDLVRSFDNVVVTRTFSKSYSLAGMRLGLAIARPELIAALNKIRDHYNLDRLAQAAAAAALADQPYFKECVRKIKETRAWFTAELQKFGYQVIPSSGNFVFASPPDRDGTRIYQGLYDRKILVRHFTDPKLAHGLRISIGSREEMEQTVKALRELGPGR.

Lys-209 is subject to N6-(pyridoxal phosphate)lysine.

Belongs to the class-II pyridoxal-phosphate-dependent aminotransferase family. Histidinol-phosphate aminotransferase subfamily. As to quaternary structure, homodimer. It depends on pyridoxal 5'-phosphate as a cofactor.

It catalyses the reaction L-histidinol phosphate + 2-oxoglutarate = 3-(imidazol-4-yl)-2-oxopropyl phosphate + L-glutamate. It participates in amino-acid biosynthesis; L-histidine biosynthesis; L-histidine from 5-phospho-alpha-D-ribose 1-diphosphate: step 7/9. The sequence is that of Histidinol-phosphate aminotransferase from Geobacter sp. (strain M21).